The primary structure comprises 150 residues: MRLQYRVLDTRLGDSIPLPHYATDGSAGLDLRAMVKEPLTLQPGDTELLPTGMSIFIDDPGYAGMILPRSGLGHKHGIVLGNLVGLIDSDYQGELMVSCWNRGQQPFTLEPGERVAQLVIVPVMQVELKQVESFSASKRGEGGFGHSGRQ.

Substrate-binding positions include 69 to 71 (RSG), Asn82, 86 to 88 (LID), and Met96.

The protein belongs to the dUTPase family. The cofactor is Mg(2+).

It catalyses the reaction dUTP + H2O = dUMP + diphosphate + H(+). Its pathway is pyrimidine metabolism; dUMP biosynthesis; dUMP from dCTP (dUTP route): step 2/2. Its function is as follows. This enzyme is involved in nucleotide metabolism: it produces dUMP, the immediate precursor of thymidine nucleotides and it decreases the intracellular concentration of dUTP so that uracil cannot be incorporated into DNA. This chain is Deoxyuridine 5'-triphosphate nucleotidohydrolase, found in Alcanivorax borkumensis (strain ATCC 700651 / DSM 11573 / NCIMB 13689 / SK2).